Here is a 216-residue protein sequence, read N- to C-terminus: Neural cell adhesion molecule L1.2 (216 aa).

One can recognise a Fibronectin type-III domain in the interval 1–64 (EFFIHYLRKD…QTAGARVMEV (64 aa)). Residues 1–73 (EFFIHYLRKD…VKSGFVTESW (73 aa)) are Extracellular-facing. Asn22 and Asn46 each carry an N-linked (GlcNAc...) asparagine glycan. The helical transmembrane segment at 74–94 (FIGLISALVLLLLVLLILCFI) threads the bilayer. Over 95–216 (KRSKGGKYSV…GLPNSAALLD (122 aa)) the chain is Cytoplasmic. Disordered stretches follow at residues 127–149 (YRSL…CEDS) and 173–216 (DESL…ALLD). Basic and acidic residues predominate over residues 128–139 (RSLESDNEEKRT).

This sequence belongs to the immunoglobulin superfamily. L1/neurofascin/NgCAM family. In terms of tissue distribution, expressed in many postmitotic neurons in 16-36 hours embryos. Little or no expression in the olfactory placode, the anterior lateral line/acoustic ganglia complex, the posterior lateral line ganglion, late-developing hindbrain neurons and some Rohon-Beard cells in the spinal cord.

It is found in the cell membrane. Its subcellular location is the cell projection. The protein localises to the growth cone. In terms of biological role, cell adhesion molecule with an important role in the development of the nervous system. Involved in neuron-neuron adhesion, neurite fasciculation, outgrowth of neurites, etc. Binds to axonin on neurons. This is Neural cell adhesion molecule L1.2 (nadl1.2) from Danio rerio (Zebrafish).